Consider the following 347-residue polypeptide: NADH-ubiquinone oxidoreductase chain 2 (347 aa).

Helical transmembrane passes span 1–21, 26–46, 56–76, 96–116, 153–171, 178–198, 199–219, 237–257, 277–297, and 326–346; these read MTPM…TLTL, WLLM…LLTY, AIKY…AASL, GIMT…YWVP, ILLT…NGLN, VMAY…IYFP, TLTT…FTVF, APIM…LPPL, IMAT…MRII, and LPTL…FITL.

This sequence belongs to the complex I subunit 2 family. Core subunit of respiratory chain NADH dehydrogenase (Complex I) which is composed of 45 different subunits. Interacts with TMEM242.

It is found in the mitochondrion inner membrane. It carries out the reaction a ubiquinone + NADH + 5 H(+)(in) = a ubiquinol + NAD(+) + 4 H(+)(out). In terms of biological role, core subunit of the mitochondrial membrane respiratory chain NADH dehydrogenase (Complex I) which catalyzes electron transfer from NADH through the respiratory chain, using ubiquinone as an electron acceptor. Essential for the catalytic activity and assembly of complex I. This chain is NADH-ubiquinone oxidoreductase chain 2, found in Ornithorhynchus anatinus (Duckbill platypus).